A 314-amino-acid polypeptide reads, in one-letter code: Trihelix transcription factor ASR3 (314 aa).

The disordered stretch occupies residues 1 to 34 (MALEQLGLGVSAVDGGENSSAPSNDGGDDGVKTA). One can recognise a Myb-like domain in the interval 38-104 (RWTRQEILVL…QCRKRWSNLA (67 aa)). The Nuclear localization signal signature appears at 84–91 (CKRHGVNR). The short motif at 161-165 (LSLGL) is the EAR 1 element. T189 bears the Phosphothreonine; by MAPK4 mark. A disordered region spans residues 207–255 (CVADQGRVKEKQPEAANVEGGSTSQEERKRKRTSFGEKEEEEEEGETKK). An EAR 2 motif is present at residues 280–284 (LNLKL).

As to quaternary structure, homodimer. Interacts directly with MPK4. In terms of processing, phosphorylated on Thr-189 by MPK4 in response to microbe-associated molecular patterns (MAMPs, e.g. flg22, elf18, chitin, and LPS). This phosphorylation enhances DNA-binding and thus negatively regulates immune gene expression.

Its subcellular location is the nucleus. Transcriptional repressor that binds DNA and plays a negative role in regulating microbe-associated molecular patterns-(MAMPs, e.g. flg22, elf18, chitin, and LPS) triggered immunity (PTI) by negatively regulating immune gene expression. The protein is Trihelix transcription factor ASR3 of Arabidopsis thaliana (Mouse-ear cress).